Consider the following 951-residue polypeptide: MMGANSTEWHGQSVEQVTELLGTDVERGLKESVVGQLQKQFGPNELKGQRGVNPWKVLLAQFTNGLTVILLIATVVSFAVQDHAEGGVLAFVIIFNASVGFVQEYRAEKTMDALRRMASPTAKVIRDGGLDRISSPGVVPGDIIVFEVGDVVPADCRLIEVLNLEVDEAMLTGESLPVAKTVEAIKGENATVGDRLNMVYSSTILTKGRGKGIAVATGMSTEIGKITKSISETGQSSTPMQKRLNRMAYILFGISLVLAVIVFAVNKFEFNTDIIIYAVSLGIAVIPEGLIAVITIVMALGVRRMASQQALVRKLVALESLQAVTNICSDKTGTLTQGKMTVTTLWLPGMEDQYSISGNGWETSGEISVREQPIDAQECLSDLRFRLLVECSALCNTANIVEASEGKVWGDPTEIALQVLAYKLQMGKPSFRSRKEPITEYPFSSAEKRMSMLYRDVERDAFEIYTKGAENVLAICDRLLEKGEEVEISSRDEFMQSVSAQIQIMAKQGLRVLVVAYRTVSEKEMAKSVSKWERVDVERNMTFLGLVGIRDTPRPESRIAVDQCYEAGIIVHMLTGDHHDTALAIAREVGIIRPAPNSADESVVPMSNPVMTAAEFDALSEEQIDDLNELPLVIARCTPATKVRMIEALHRRKKFAAMTGDGVNDAPSLKKADVGIAMGAGSDVAKQSSEIVLTDNNFATIVMAVSEGRRIFSNIRKFILHLVSTNVGEVIVLIIGLAFKDRNGVSVFPLAPVQILFMNMVTSTPPAMALGVEAASKDTMKVPPHTKGLFGKEVLADMMVYGIIMGSLILVDWVLVIYAFGDSQLGLECNSDRMLNECNTVFRARSTIMVALIWMLLLHAYNCRHPRASLFTAEGGGASKLFSNRLLVWSVLLGSLMPIPTVYIPTLNTKIFKQETISWEWSIVVVSVVAFFFLSELYKLIKRNVMTSRVI.

At 1 to 57 (MMGANSTEWHGQSVEQVTELLGTDVERGLKESVVGQLQKQFGPNELKGQRGVNPWKV) the chain is on the cytoplasmic side. A helical membrane pass occupies residues 58–78 (LLAQFTNGLTVILLIATVVSF). The Extracellular segment spans residues 79–82 (AVQD). A helical membrane pass occupies residues 83-103 (HAEGGVLAFVIIFNASVGFVQ). Topologically, residues 104–247 (EYRAEKTMDA…TPMQKRLNRM (144 aa)) are cytoplasmic. Residues 248-268 (AYILFGISLVLAVIVFAVNKF) traverse the membrane as a helical segment. At 269-273 (EFNTD) the chain is on the extracellular side. Residues 274–294 (IIIYAVSLGIAVIPEGLIAVI) traverse the membrane as a helical segment. Residues 295–717 (TIVMALGVRR…GRRIFSNIRK (423 aa)) are Cytoplasmic-facing. The 4-aspartylphosphate intermediate role is filled by D330. D330 and T332 together coordinate Mg(2+). Positions 332, 414, 467, 511, 575, 576, 577, 636, and 642 each coordinate ATP. D661 lines the Mg(2+) pocket. N664 is a binding site for ATP. A helical transmembrane segment spans residues 718 to 738 (FILHLVSTNVGEVIVLIIGLA). Residues 739–743 (FKDRN) lie on the Extracellular side of the membrane. A helical transmembrane segment spans residues 744–764 (GVSVFPLAPVQILFMNMVTST). The Cytoplasmic segment spans residues 765 to 799 (PPAMALGVEAASKDTMKVPPHTKGLFGKEVLADMM). A helical transmembrane segment spans residues 800–820 (VYGIIMGSLILVDWVLVIYAF). The Extracellular portion of the chain corresponds to 821-840 (GDSQLGLECNSDRMLNECNT). The helical transmembrane segment at 841–861 (VFRARSTIMVALIWMLLLHAY) threads the bilayer. The Cytoplasmic segment spans residues 862–885 (NCRHPRASLFTAEGGGASKLFSNR). The chain crosses the membrane as a helical span at residues 886–906 (LLVWSVLLGSLMPIPTVYIPT). Residues 907–916 (LNTKIFKQET) are Extracellular-facing. A helical membrane pass occupies residues 917 to 937 (ISWEWSIVVVSVVAFFFLSEL). Over 938–951 (YKLIKRNVMTSRVI) the chain is Cytoplasmic.

The protein belongs to the cation transport ATPase (P-type) (TC 3.A.3) family. Type IID subfamily. Requires Mg(2+) as cofactor. Post-translationally, the active site is phosphorylated in presence of sodium or potassium and in conditions of higher pH. Not phosphorylated in presence of calcium ions.

It is found in the cell membrane. The catalysed reaction is Na(+)(in) + ATP + H2O = Na(+)(out) + ADP + phosphate + H(+). The enzyme catalyses K(+)(in) + ATP + H2O = K(+)(out) + ADP + phosphate + H(+). In terms of biological role, catalyzes the hydrolysis of ATP coupled with the export of sodium and potassium from the cell. Appears to export potassium more efficiently than sodium. May transport other cations such as lithium. Sodium/potassium efflux ATPases are involved in salt tolerance and maintaining the membrane potential across the plasma membrane in high salinity (Na+) or alkaline (K+) environments. The sequence is that of Sodium/potassium exporting P-type ATPase 1 from Marchantia polymorpha (Common liverwort).